We begin with the raw amino-acid sequence, 99 residues long: Cyclin-dependent protein kinase inhibitor SMR7 (99 aa).

The disordered stretch occupies residues 49–70 (ICITPTARGAKTPECPAAPRKR).

In terms of tissue distribution, expressed in root meristems after induction.

Functionally, probable cyclin-dependent protein kinase (CDK) inhibitor that functions as a repressor of mitosis in the endoreduplication cell cycle. Acts as a potent cell cycle inhibitor, regulating a hydroxyurea-dependent checkpoint in leaves. In Arabidopsis thaliana (Mouse-ear cress), this protein is Cyclin-dependent protein kinase inhibitor SMR7.